We begin with the raw amino-acid sequence, 128 residues long: MEKLILAIIVGCGGFIGAALRYLISENTSKMFNGNFPYGTLIVNIVGAIIIGFIMDINANTSLISGHTKLFLTTGMMGGLTTFSTFSYETINLINCGNILMGCTNAALNLGLSLVGVIIGQALGKIVY.

Transmembrane regions (helical) follow at residues 4-24 (LILA…RYLI), 37-57 (PYGT…IMDI), 63-83 (LISG…LTTF), and 99-119 (ILMG…GVII). Na(+) contacts are provided by G78 and T81.

This sequence belongs to the fluoride channel Fluc/FEX (TC 1.A.43) family.

Its subcellular location is the cell membrane. The enzyme catalyses fluoride(in) = fluoride(out). Its activity is regulated as follows. Na(+) is not transported, but it plays an essential structural role and its presence is essential for fluoride channel function. In terms of biological role, fluoride-specific ion channel. Important for reducing fluoride concentration in the cell, thus reducing its toxicity. The protein is Fluoride-specific ion channel FluC of Clostridium novyi (strain NT).